The sequence spans 756 residues: Membrane-anchored protein 1 (756 aa).

Residues 1 to 24 form the signal peptide; it reads MIRNTLAFLAILFLLIPTALLIIG. Asn-52 and Asn-64 each carry an N-linked (GlcNAc...) asparagine glycan. The next 3 helical transmembrane spans lie at 91–111, 120–140, and 148–168; these read IISA…IFLV, IIVV…ELVL, and QSYV…ALCL. N-linked (GlcNAc...) asparagine glycosylation is present at Asn-190. Residues 281–328 form a disordered region; the sequence is YDEFRKSESSPSRSSVLSTSKPEVHETEGYCPHKTGNRPGFPSLNIPR. The span at 289–300 shows a compositional bias: low complexity; sequence SSPSRSSVLSTS. Asn-396 and Asn-407 each carry an N-linked (GlcNAc...) asparagine glycan. The disordered stretch occupies residues 427 to 453; that stretch reads EPPATRMPQTRSPVNDHSSFPSDLPIK. The span at 433-447 shows a compositional bias: polar residues; sequence MPQTRSPVNDHSSFP. Position 438 is a phosphoserine (Ser-438). 20 N-linked (GlcNAc...) asparagine glycosylation sites follow: Asn-459, Asn-470, Asn-471, Asn-496, Asn-497, Asn-521, Asn-522, Asn-547, Asn-548, Asn-573, Asn-574, Asn-594, Asn-598, Asn-599, Asn-618, Asn-623, Asn-649, Asn-664, Asn-676, and Asn-685. Residues 482-650 form a disordered region; it reads MLKNVGNGPR…MPTSPNSRNN (169 aa). Positions 485–520 are enriched in low complexity; sequence NVGNGPRNAPRNNSSNNLHAQGGMPMNMRGPRGAPR. 3 stretches are compositionally biased toward polar residues: residues 593–605, 617–629, and 640–650; these read RNTS…SEFN, RNAS…TDLF, and GMPTSPNSRNN. Residues 686–697 show a composition bias toward polar residues; the sequence is GSRNPSHGSLNT. Positions 686-713 are disordered; sequence GSRNPSHGSLNTAHAGMGYGPRSMMRDP. N-linked (GlcNAc...) asparagine glycosylation is present at Asn-715. Positions 735 to 756 are disordered; sequence FELPVRGNRNNRRGPGGNRMIR.

It to yeast YOL019W and YMR063W.

The protein localises to the cell membrane. It is found in the cell tip. In terms of biological role, required for correct cell separation at high temperatures. The polypeptide is Membrane-anchored protein 1 (mac1) (Schizosaccharomyces pombe (strain 972 / ATCC 24843) (Fission yeast)).